The chain runs to 53 residues: HOXB-AS3 peptide (53 aa).

The interval 1–53 is disordered; that stretch reads MPVLPGTQRYPHQRRRFQAAGGGAESGKRGSEEAPGVAWSGSESGRDAATPAW.

As to quaternary structure, interacts with HNRNPA1 (via the RGG-box). Interacts with IGF2BP2.

Its function is as follows. Blocks the binding of HNRNPA1 to the intronic sequences flanking exon 9 of the PKM gene by competitively binding to the HNRNPA1 RGG-box motif. This inhibits inclusion of exon 9 and promotes inclusion of exon 10, suppressing formation of the PKM M2 isoform and promoting production of the M1 isoform. Also suppresses HNRNPA1-mediated processing of microRNA 18a (miR-18a). Promotes MYC stability through interaction with IGF2BP2. The polypeptide is HOXB-AS3 peptide (Homo sapiens (Human)).